The primary structure comprises 118 residues: Large ribosomal subunit protein bL19 (118 aa).

This sequence belongs to the bacterial ribosomal protein bL19 family.

In terms of biological role, this protein is located at the 30S-50S ribosomal subunit interface and may play a role in the structure and function of the aminoacyl-tRNA binding site. In Dictyoglomus turgidum (strain DSM 6724 / Z-1310), this protein is Large ribosomal subunit protein bL19.